We begin with the raw amino-acid sequence, 555 residues long: CCR4-NOT transcription complex subunit 6-like (555 aa).

Residues 1 to 152 (MRLIGMPKEK…SLYQDPDGTR (152 aa)) are required for interaction with CNOT1, CNOT3 and CNOT7. LRR repeat units follow at residues 57–78 (HLTA…IAKL), 80–101 (NLVY…LGNM), 103–125 (SLRE…GRLF), and 126–148 (QLQT…YQDP). The segment at 158 to 555 (MLDNLAVHPE…VNGVHLPNRR (398 aa)) is nuclease domain. Glutamate 240 contacts Mg(2+). Residues glutamate 240, glutamate 276, histidine 360, and proline 365 each contribute to the substrate site. Aspartate 410 provides a ligand contact to Mg(2+). The active-site Proton donor/acceptor is aspartate 410. Substrate contacts are provided by asparagine 412, asparagine 479, and phenylalanine 484.

This sequence belongs to the CCR4/nocturin family. In terms of assembly, component of the CCR4-NOT complex; distinct complexes seem to exist that differ in the participation of probably mutually exclusive catalytic subunits; the complex contains two deadenylase subunits, CNOT6 or CNOT6L, and CNOT7 or CNOT8. Interacts with CNOT1, CNOT3, CNOT7, CNOT8 and CNOT9. Interacts with TOB1. Interacts with NANOS2. Interacts with ZFP36. Interacts with ZFP36L2. Interacts with RBM46. Mg(2+) serves as cofactor.

It is found in the cytoplasm. The protein resides in the nucleus. The catalysed reaction is Exonucleolytic cleavage of poly(A) to 5'-AMP.. Poly(A) nuclease with 3'-5' RNase activity. Catalytic component of the CCR4-NOT complex which is one of the major cellular mRNA deadenylases and is linked to various cellular processes including bulk mRNA degradation, miRNA-mediated repression, translational repression during translational initiation and general transcription regulation. Additional complex functions may be a consequence of its influence on mRNA expression. Involved in mRNA decay mediated by the major-protein-coding determinant of instability (mCRD) of the FOS gene in the cytoplasm. Involved in deadenylation-dependent degradation of CDKN1B mRNA. Its mRNA deadenylase activity can be inhibited by TOB1. Mediates cell proliferation and cell survival and prevents cellular senescence. The protein is CCR4-NOT transcription complex subunit 6-like (Cnot6l) of Mus musculus (Mouse).